We begin with the raw amino-acid sequence, 324 residues long: D-erythronate dehydrogenase (324 aa).

Positions 125, 149, and 153 each coordinate NAD(+). Residue Y149 is the Proton acceptor of the active site.

The protein belongs to the NAD(P)-dependent epimerase/dehydratase family.

The enzyme catalyses D-erythronate + NAD(+) = 2-dehydro-D-erythronate + NADH + H(+). Its function is as follows. Catalyzes oxidation of D-erythronate to 2-oxo-tetronate. Can use either NAD(+) or NADP(+) as cosubstrate, with a preference for NAD(+). The protein is D-erythronate dehydrogenase of Cupriavidus necator (strain ATCC 17699 / DSM 428 / KCTC 22496 / NCIMB 10442 / H16 / Stanier 337) (Ralstonia eutropha).